Reading from the N-terminus, the 256-residue chain is Pimeloyl-[acyl-carrier protein] methyl ester esterase (256 aa).

One can recognise an AB hydrolase-1 domain in the interval H15 to P242. Residues W22, S82 to L83, and F143 to Q147 contribute to the substrate site. The Nucleophile role is filled by S82. Catalysis depends on residues D207 and H235. Residue H235 coordinates substrate.

The protein belongs to the AB hydrolase superfamily. Carboxylesterase BioH family. Monomer.

The protein resides in the cytoplasm. The catalysed reaction is 6-carboxyhexanoyl-[ACP] methyl ester + H2O = 6-carboxyhexanoyl-[ACP] + methanol + H(+). It participates in cofactor biosynthesis; biotin biosynthesis. The physiological role of BioH is to remove the methyl group introduced by BioC when the pimeloyl moiety is complete. It allows to synthesize pimeloyl-ACP via the fatty acid synthetic pathway through the hydrolysis of the ester bonds of pimeloyl-ACP esters. The chain is Pimeloyl-[acyl-carrier protein] methyl ester esterase from Escherichia coli (strain K12 / MC4100 / BW2952).